Here is a 224-residue protein sequence, read N- to C-terminus: Deoxyribose-phosphate aldolase (224 aa).

Residue Asp-98 is the Proton donor/acceptor of the active site. Catalysis depends on Lys-159, which acts as the Schiff-base intermediate with acetaldehyde. Lys-189 functions as the Proton donor/acceptor in the catalytic mechanism.

The protein belongs to the DeoC/FbaB aldolase family. DeoC type 1 subfamily.

It localises to the cytoplasm. It catalyses the reaction 2-deoxy-D-ribose 5-phosphate = D-glyceraldehyde 3-phosphate + acetaldehyde. It participates in carbohydrate degradation; 2-deoxy-D-ribose 1-phosphate degradation; D-glyceraldehyde 3-phosphate and acetaldehyde from 2-deoxy-alpha-D-ribose 1-phosphate: step 2/2. Catalyzes a reversible aldol reaction between acetaldehyde and D-glyceraldehyde 3-phosphate to generate 2-deoxy-D-ribose 5-phosphate. The chain is Deoxyribose-phosphate aldolase from Methanothermobacter thermautotrophicus (strain ATCC 29096 / DSM 1053 / JCM 10044 / NBRC 100330 / Delta H) (Methanobacterium thermoautotrophicum).